A 512-amino-acid polypeptide reads, in one-letter code: Maturase K (512 aa).

The protein belongs to the intron maturase 2 family. MatK subfamily.

It localises to the plastid. Its subcellular location is the chloroplast. Usually encoded in the trnK tRNA gene intron. Probably assists in splicing its own and other chloroplast group II introns. The protein is Maturase K of Lilium longiflorum (Trumpet lily).